Here is a 356-residue protein sequence, read N- to C-terminus: Dual-specificity RNA methyltransferase RlmN (356 aa).

The Proton acceptor role is filled by glutamate 87. The Radical SAM core domain maps to 106–339 (QEAKYTICVS…CTIRDSKGID (234 aa)). A disulfide bridge links cysteine 113 with cysteine 344. Residues cysteine 120, cysteine 124, and cysteine 127 each contribute to the [4Fe-4S] cluster site. S-adenosyl-L-methionine is bound by residues 170-171 (GE), serine 202, 225-227 (SLH), and asparagine 301. Cysteine 344 serves as the catalytic S-methylcysteine intermediate.

The protein belongs to the radical SAM superfamily. RlmN family. The cofactor is [4Fe-4S] cluster.

Its subcellular location is the cytoplasm. It catalyses the reaction adenosine(2503) in 23S rRNA + 2 reduced [2Fe-2S]-[ferredoxin] + 2 S-adenosyl-L-methionine = 2-methyladenosine(2503) in 23S rRNA + 5'-deoxyadenosine + L-methionine + 2 oxidized [2Fe-2S]-[ferredoxin] + S-adenosyl-L-homocysteine. The catalysed reaction is adenosine(37) in tRNA + 2 reduced [2Fe-2S]-[ferredoxin] + 2 S-adenosyl-L-methionine = 2-methyladenosine(37) in tRNA + 5'-deoxyadenosine + L-methionine + 2 oxidized [2Fe-2S]-[ferredoxin] + S-adenosyl-L-homocysteine. In terms of biological role, specifically methylates position 2 of adenine 2503 in 23S rRNA and position 2 of adenine 37 in tRNAs. m2A2503 modification seems to play a crucial role in the proofreading step occurring at the peptidyl transferase center and thus would serve to optimize ribosomal fidelity. The sequence is that of Dual-specificity RNA methyltransferase RlmN from Sulfurimonas denitrificans (strain ATCC 33889 / DSM 1251) (Thiomicrospira denitrificans (strain ATCC 33889 / DSM 1251)).